Reading from the N-terminus, the 31-residue chain is Cytochrome b6-f complex subunit 8 (31 aa).

The helical transmembrane segment at 5 to 25 (IVSMAWAALMVVFTFSLSLVI) threads the bilayer.

Belongs to the PetN family. The 4 large subunits of the cytochrome b6-f complex are cytochrome b6, subunit IV (17 kDa polypeptide, PetD), cytochrome f and the Rieske protein, while the 4 small subunits are PetG, PetL, PetM and PetN. The complex functions as a dimer.

The protein localises to the plastid membrane. Component of the cytochrome b6-f complex, which mediates electron transfer between photosystem II (PSII) and photosystem I (PSI), cyclic electron flow around PSI, and state transitions. The chain is Cytochrome b6-f complex subunit 8 from Cuscuta gronovii (Common dodder).